Reading from the N-terminus, the 1316-residue chain is Serine/threonine-protein kinase 36 (1316 aa).

The region spanning 4 to 254 (YHVLEMIGEG…WPDLLHHPFI (251 aa)) is the Protein kinase domain. Residues 10–18 (IGEGSFGRV) and K33 contribute to the ATP site. D125 functions as the Proton acceptor in the catalytic mechanism. The disordered stretch occupies residues 389–418 (QGFPEPRPEAMGRQSTDVVDPENEEPDSDD). Over residues 407–418 (VDPENEEPDSDD) the composition is skewed to acidic residues.

Belongs to the protein kinase superfamily. Ser/Thr protein kinase family. In terms of assembly, interacts with SPAG16 and KIF27. Mg(2+) is required as a cofactor. Weakly expressed in the heart and thymus, present at moderate to high levels in the lungs, pancreas, and kidneys and at higher levels in the brain and cerebellum. Very highly expressed in the testis.

The protein resides in the cytoplasm. It localises to the nucleus. Its subcellular location is the cytoskeleton. The protein localises to the cilium axoneme. The enzyme catalyses L-seryl-[protein] + ATP = O-phospho-L-seryl-[protein] + ADP + H(+). It catalyses the reaction L-threonyl-[protein] + ATP = O-phospho-L-threonyl-[protein] + ADP + H(+). Functionally, serine/threonine protein kinase which plays an important role in the sonic hedgehog (Shh) pathway by regulating the activity of GLI transcription factors. Controls the activity of the transcriptional regulators GLI1, GLI2 and GLI3 by opposing the effect of SUFU and promoting their nuclear localization. GLI2 requires an additional function of STK36 to become transcriptionally active, but the enzyme does not need to possess an active kinase catalytic site for this to occur. Required for postnatal development, possibly by regulating the homeostasis of cerebral spinal fluid or ciliary function. Essential for construction of the central pair apparatus of motile cilia. The polypeptide is Serine/threonine-protein kinase 36 (Mus musculus (Mouse)).